The chain runs to 246 residues: Orotidine 5'-phosphate decarboxylase (246 aa).

Residues D22, K44, 71 to 80, T130, R191, Q201, G221, and R222 contribute to the substrate site; that span reads DLKYHDIPHT. The active-site Proton donor is the K73.

It belongs to the OMP decarboxylase family. Type 1 subfamily. In terms of assembly, homodimer.

The catalysed reaction is orotidine 5'-phosphate + H(+) = UMP + CO2. The protein operates within pyrimidine metabolism; UMP biosynthesis via de novo pathway; UMP from orotate: step 2/2. In terms of biological role, catalyzes the decarboxylation of orotidine 5'-monophosphate (OMP) to uridine 5'-monophosphate (UMP). This chain is Orotidine 5'-phosphate decarboxylase, found in Neisseria meningitidis serogroup C (strain 053442).